A 411-amino-acid polypeptide reads, in one-letter code: F-box protein At4g19940 (411 aa).

Residues 29–75 (RQPIPEIPFDLVIEILTRLPAKSLMRFKSVSKLWSSLICSRNFTNRL) form the F-box domain.

This is F-box protein At4g19940 from Arabidopsis thaliana (Mouse-ear cress).